The following is a 193-amino-acid chain: Putative manganese efflux pump MntP (193 aa).

The next 6 membrane-spanning stretches (helical) occupy residues valine 6–cysteine 26, valine 39–leucine 59, isoleucine 61–glycine 81, leucine 106–phenylalanine 126, asparagine 132–phenylalanine 152, and tryptophan 165–histidine 185.

The protein belongs to the MntP (TC 9.B.29) family.

It is found in the cell membrane. Functionally, probably functions as a manganese efflux pump. The chain is Putative manganese efflux pump MntP from Dehalococcoides mccartyi (strain ATCC BAA-2266 / KCTC 15142 / 195) (Dehalococcoides ethenogenes (strain 195)).